Reading from the N-terminus, the 457-residue chain is Proton-translocating ferredoxin:NAD(+) oxidoreductase complex subunit C (457 aa).

4Fe-4S ferredoxin-type domains are found at residues 353 to 386 (TKNDVNDGKESSCIRCGRCLKACPMHLNPSMLSI) and 396 to 427 (AKEEYNLLDCVECGSCVYTCPAKRKIVQYIRY). Residues cysteine 365, cysteine 368, cysteine 371, cysteine 375, cysteine 405, cysteine 408, cysteine 411, and cysteine 415 each coordinate [4Fe-4S] cluster. The segment at 433 to 457 (RAAGEREKAKAAKAKEKKEKEEVLK) is disordered.

The protein belongs to the 4Fe4S bacterial-type ferredoxin family. RnfC subfamily. The complex is composed of six subunits: RnfA, RnfB, RnfC, RnfD, RnfE and RnfG. [4Fe-4S] cluster is required as a cofactor.

The protein localises to the cell membrane. Part of a membrane-bound complex that couples electron transfer with translocation of ions across the membrane. Couples electron transfer from reduced ferredoxin to NAD(+) with translocation of H(+) out of the cell. Essential for energy conservation during autotrophic growth. Contributes to ATP synthesis during heterotrophic growth. The polypeptide is Proton-translocating ferredoxin:NAD(+) oxidoreductase complex subunit C (Clostridium ljungdahlii (strain ATCC 55383 / DSM 13528 / PETC)).